Here is a 192-residue protein sequence, read N- to C-terminus: tRNA (cytidine(56)-2'-O)-methyltransferase (192 aa).

S-adenosyl-L-methionine-binding positions include Leu-84 and 112-116 (GGEKV).

This sequence belongs to the aTrm56 family. As to quaternary structure, homodimer.

It localises to the cytoplasm. The catalysed reaction is cytidine(56) in tRNA + S-adenosyl-L-methionine = 2'-O-methylcytidine(56) in tRNA + S-adenosyl-L-homocysteine + H(+). In terms of biological role, specifically catalyzes the AdoMet-dependent 2'-O-ribose methylation of cytidine at position 56 in tRNAs. The chain is tRNA (cytidine(56)-2'-O)-methyltransferase from Halobacterium salinarum (strain ATCC 700922 / JCM 11081 / NRC-1) (Halobacterium halobium).